The following is a 464-amino-acid chain: F-box/WD repeat-containing protein 12 (464 aa).

In terms of domain architecture, F-box spans 1–45 (MEIRLPDLALKRIFSFLDLFGLLQVSQVNKHWNRIADSDYLWRSL). WD repeat units follow at residues 89–132 (YKVT…CAWD), 136–174 (GTMIWSSPVQEFHFSNLVTLPQMHLAITMDRKKTIKVWN), 178–217 (RDALAVLPMPQPCYCMEAYLTKDGPFLMVGDAAGDIYTFT), 222–263 (RDVS…FLTE), 270–315 (EGSV…ITFD), 320–367 (KTGG…LLFS), 370–407 (GFLLQRFEDHQAAINNFWVDPCYVLTTSENSVHVYMWE), and 416–461 (RSCC…VMYS).

As to quaternary structure, interacts with SKP1. Interacts with CUL1. Interacts with IL22RA1. In terms of tissue distribution, ubiquitously expressed.

Its pathway is protein modification; protein ubiquitination. Substrate-recognition component of the SCF (SKP1-CUL1-F-box protein)-type E3 ubiquitin ligase complex. Promotes degradation of interleukin-22 receptor subunit IL22RA1 in resting and IL22-stimulated conditions by facilitating its ubiquitination. Functions as a cell growth suppressor. This is F-box/WD repeat-containing protein 12 (FBXW12) from Homo sapiens (Human).